We begin with the raw amino-acid sequence, 87 residues long: MAKGQSLQDPFLNALRRERIPVSIYLVNGIKLQGQIESFDQFVILLKNTVSQMVYKHAISTVVPARAVNHHQHVPGAAGEEQGEAEA.

Residues Asp9–Val68 enclose the Sm domain.

The protein belongs to the Hfq family. As to quaternary structure, homohexamer.

RNA chaperone that binds small regulatory RNA (sRNAs) and mRNAs to facilitate mRNA translational regulation in response to envelope stress, environmental stress and changes in metabolite concentrations. Also binds with high specificity to tRNAs. The sequence is that of RNA-binding protein Hfq from Aeromonas salmonicida (strain A449).